A 1212-amino-acid chain; its full sequence is Histone demethylase UTY (1212 aa).

8 TPR repeats span residues 88–121 (SDFF…QTDY), 125–158 (AAFL…DPNF), 165–193 (HLRL…IDCN), 200–233 (VEIQ…ESLP), 245–278 (GWMH…DPNS), 279–312 (GQSW…SEAS), 313–346 (ADTW…DHGH), and 347–380 (AAAW…KSCN). The span at 530 to 539 (FTKESKDSRS) shows a compositional bias: basic and acidic residues. Positions 530–555 (FTKESKDSRSKSLTSKTSRKDRDTSN) are disordered. At threonine 752 the chain carries Phosphothreonine. Residues 865–886 (RRTQVKDYSDNESTCSDNSGRR) are disordered. The region spanning 907–1070 (KWKLQLHELT…YKLAVERYEW (164 aa)) is the JmjC domain. Residues histidine 958, glutamate 960, and histidine 1038 each coordinate Fe cation. Zn(2+) is bound by residues cysteine 1143, cysteine 1146, cysteine 1170, and cysteine 1173.

It belongs to the UTX family. Binds TLE1 and TLE2. It depends on L-ascorbate as a cofactor. Requires Fe(2+) as cofactor.

It is found in the nucleus. It catalyses the reaction N(6),N(6),N(6)-trimethyl-L-lysyl(27)-[histone H3] + 2 2-oxoglutarate + 2 O2 = N(6)-methyl-L-lysyl(27)-[histone H3] + 2 formaldehyde + 2 succinate + 2 CO2. Male-specific histone demethylase that catalyzes trimethylated 'Lys-27' (H3K27me3) demethylation in histone H3. Has relatively low KDM activity. The chain is Histone demethylase UTY (Uty) from Mus musculus (Mouse).